The sequence spans 401 residues: Tyrosine--tRNA ligase (401 aa).

Residues 43 to 52 (PTAPDLHLGH) carry the 'HIGH' region motif. The 'KMSKS' region signature appears at 227–231 (KMSKS). Residue Lys230 coordinates ATP. In terms of domain architecture, S4 RNA-binding spans 338–399 (MAIGNVLKEA…GKRRFAKINL (62 aa)).

It belongs to the class-I aminoacyl-tRNA synthetase family. TyrS type 2 subfamily. In terms of assembly, homodimer.

The protein localises to the cytoplasm. The enzyme catalyses tRNA(Tyr) + L-tyrosine + ATP = L-tyrosyl-tRNA(Tyr) + AMP + diphosphate + H(+). Catalyzes the attachment of tyrosine to tRNA(Tyr) in a two-step reaction: tyrosine is first activated by ATP to form Tyr-AMP and then transferred to the acceptor end of tRNA(Tyr). The polypeptide is Tyrosine--tRNA ligase (Idiomarina loihiensis (strain ATCC BAA-735 / DSM 15497 / L2-TR)).